Reading from the N-terminus, the 1386-residue chain is MFFKRSTNSRKTSANSSSDTSTSSESLLLPLLNNTKAGARSQKGSVHRQSGKKARRKMMENPYVCSLELDELSADDSIIDYSVFSDDSFLLILLLTSKGDVQAYLETSRDTKPRKNVVNIKTACSLNVSPVTVCIGSQAAFAIFGLADGNLLVTPIRLLIDVTWGGSSWATTTVIDLSLPTVDPCLATPTCTKCFVSNFPPCTMAVVANKAGNILLVDLHLRKCVSELKAPQSLHQIDILLDENSIELLVTGFTGAQWIIPIERSGKGFREVLTTCVPSDLTVLEPATMQFFAADSCGVVALDTTESIVEVYNTFHSLAHSSKRTFKVPPETWMVHAGDNMLFTVSNDNEIRSALHFGFMSSRLEYTLVRTSTNWRPLGIVAMPSRPHKLAGIFVVNERGLVRVEQSTALNLTKIASEFFFRLSPLQLNSKSVAQVANACRIDTAEFQSALIPNLLSTRKNRQLTNKELSQIYSIAKAINLSMSDLLKAFENESIGEQLLPEVLNTIQTNPAKHDNLMQRVVEMFVKRSLSAEGNMDKIREYDAELSNFLARHEHLHKGSVDCAKAGMWKCTQTLVRRDVHETKSIDTSTEVLLYIIKNRLQIWNEANSTDRLQIMSLVCHLDWSKLADADGARVCAILSAWQRDISLPSYHEMCLRIAITNSDRFPRPCQILSLVSSIHILSEKKISNHANLPNFLPLAGGNNCGATITEDDRLMIWGNFTNAQQRMEMPQMNAKSKRSDSVTNGAPTLPPPAPKPEQHLPRVLEYPGGRPRAIACGAEHILVLSSSGQLSAWGGNRFGQCGVGHSFRIANLHQVDGDWPAIEKIACGQFHSAFICSDGSLWTFGWGVWGQLGHGGRNNSNQLVPTRVNGLICKVTQIACGRAHTVVLTDTGRVLVCGSGSYGQMGVDDDIKKVFAFTPLPLGPLRVRDIATHYYHSICITEDNRVFEWGRNPQELKMRMFVMKKIRSAQLKNTEDPSSPSPSTNGSTPRVNLNLPAEIPREDLGLREVKHFLDGNIVSVACGLSHSALITSEGTLYTWGKGLDYQLGHGNKNERMEPHQVFEPNGAKWVNVSLGNNHTIASTDDGSVFAWGKNDFGQCGVLTKKNGNSADVTKKFFFQARDGRRFMPNVDESQFVQKPGLIPDVRVRNLNEDGNEGVDKEEIVDRLKASDVNVVQAVSKHLYSPIEGKCNGSIIEDEPRNGKIQKQNKYDGEDGPLCTTTALVHLIAGDVKRAIRMIEWLKTDSSTCEKSLMVLSSLVWEVMANHEDVQSREALSAAFRHVPMSDSMRKGKQIAQLWPAVWNDERVQSSLSIDEKIAMLDGFTSASKPVSCPTIPSSSLEVSSKIRVYAQCAHAEPAAVGSPPECSTCLDEWTEKVRHTLGTQL.

Disordered regions lie at residues 1-25, 37-56, and 730-760; these read MFFK…TSSE, AGAR…KARR, and MPQM…PEQH. Low complexity predominate over residues 9–25; it reads SRKTSANSSSDTSTSSE. Basic residues predominate over residues 45–56; sequence SVHRQSGKKARR. 4 RCC1 repeats span residues 737 to 787, 788 to 838, 839 to 891, and 893 to 943; these read SKRS…VLSS, SGQL…FICS, DGSL…VLTD, and GRVL…CITE. Residues 972-994 form a disordered region; sequence LKNTEDPSSPSPSTNGSTPRVNL. RCC1 repeat units follow at residues 1034–1085 and 1087–1139; these read EGTL…ASTD and GSVF…FVQK.

Functionally, could be a guanine-nucleotide releasing factor for glo-1. May play a role in gut granule biogenesis. Regulates axon termination in PLM and ALM neurons. In Caenorhabditis elegans, this protein is X-linked retinitis pigmentosa GTPase regulator homolog (glo-4).